The following is a 467-amino-acid chain: MSLSLWQQCLARLQDELPATEFSMWIRPLQAELSDNTLALYAPNRFVLDWVRDKYLNNINGLLTSFCGADAPQLRFEVGTKPVTQTPQAAVTSNVAAPAQVAQTQPQRAAPSTRSGWDNVPAPAEPTYRSNVNVKHTFDNFVEGKSNQLARAAARQVADNPGGAYNPLFLYGGTGLGKTHLLHAVGNGIMARKPNAKVVYMHSERFVQDMVKALQNNAIEEFKRYYRSVDALLIDDIQFFANKERSQEEFFHTFNALLEGNQQIILTSDRYPKEINGVEDRLKSRFGWGLTVAIEPPELETRVAILMKKADENDIRLPGEVAFFIAKRLRSNVRELEGALNRVIANANFTGRAITIDFVREALRDLLALQEKLVTIDNIQKTVAEYYKIKVADLLSKRRSRSVARPRQMAMALAKELTNHSLPEIGDAFGGRDHTTVLHACRKIEQLREESHDIKEDFSNLIRTLSS.

Residues 1 to 90 are domain I, interacts with DnaA modulators; sequence MSLSLWQQCL…KPVTQTPQAA (90 aa). The tract at residues 91–130 is domain II; the sequence is VTSNVAAPAQVAQTQPQRAAPSTRSGWDNVPAPAEPTYRS. Over residues 98 to 111 the composition is skewed to low complexity; that stretch reads PAQVAQTQPQRAAP. The tract at residues 98-119 is disordered; the sequence is PAQVAQTQPQRAAPSTRSGWDN. A domain III, AAA+ region region spans residues 131–347; it reads NVNVKHTFDN…GALNRVIANA (217 aa). ATP-binding residues include Gly-175, Gly-177, Lys-178, and Thr-179. The segment at 348-467 is domain IV, binds dsDNA; that stretch reads NFTGRAITID…FSNLIRTLSS (120 aa).

This sequence belongs to the DnaA family. In terms of assembly, oligomerizes as a right-handed, spiral filament on DNA at oriC.

It is found in the cytoplasm. Its function is as follows. Plays an essential role in the initiation and regulation of chromosomal replication. ATP-DnaA binds to the origin of replication (oriC) to initiate formation of the DNA replication initiation complex once per cell cycle. Binds the DnaA box (a 9 base pair repeat at the origin) and separates the double-stranded (ds)DNA. Forms a right-handed helical filament on oriC DNA; dsDNA binds to the exterior of the filament while single-stranded (ss)DNA is stabiized in the filament's interior. The ATP-DnaA-oriC complex binds and stabilizes one strand of the AT-rich DNA unwinding element (DUE), permitting loading of DNA polymerase. After initiation quickly degrades to an ADP-DnaA complex that is not apt for DNA replication. Binds acidic phospholipids. The sequence is that of Chromosomal replication initiator protein DnaA from Shigella sonnei (strain Ss046).